A 435-amino-acid polypeptide reads, in one-letter code: Zinc metalloproteinase/disintegrin (435 aa).

Residues 1–26 (KMCGVTQNWESYESTKKASQLNLTPE) constitute a propeptide that is removed on maturation. Pyrrolidone carboxylic acid is present on glutamine 27. The region spanning 33 to 227 (RYIKLGIFVD…HNFQCILNAP (195 aa)) is the Peptidase M12B domain. Asparagine 115 carries an N-linked (GlcNAc...) asparagine glycan. 3 disulfides stabilise this stretch: cysteine 144/cysteine 222, cysteine 184/cysteine 206, and cysteine 186/cysteine 189. Histidine 169 is a binding site for Zn(2+). The active site involves glutamate 170. Residues histidine 173 and histidine 179 each contribute to the Zn(2+) site. A propeptide spanning residues 228 to 243 (LRTDTVSTPVSGNELL) is cleaved from the precursor. One can recognise a Disintegrin domain in the interval 235–318 (TPVSGNELLE…DCPTDDFHRN (84 aa)). Residues valine 237, asparagine 240, leucine 242, glutamate 244, glutamate 247, and aspartate 250 each coordinate Ca(2+). 6 disulfide bridges follow: cysteine 249/cysteine 264, cysteine 251/cysteine 259, cysteine 258/cysteine 281, cysteine 272/cysteine 278, cysteine 277/cysteine 303, and cysteine 290/cysteine 310. The short motif at 296-298 (ECD) is the D/ECD-tripeptide element.

This sequence belongs to the venom metalloproteinase (M12B) family. P-III subfamily. P-IIIb sub-subfamily. In terms of assembly, monomer. The cofactor is Zn(2+). Post-translationally, the N-terminus of the metalloproteinase is blocked. In terms of tissue distribution, expressed by the venom gland.

The protein localises to the secreted. Inhibited by EDTA. In terms of biological role, cleaves the alpha chain of fibrinogen (FGA) preferentially and cleaves the beta chain (FGB) either on longer incubation or at high concentrations. Induces apoptosis of endothelial cells (prior to cell detachment). Functionally, disintegrin: inhibits platelet aggregation induced by ADP, thrombin, platelet-activating factor and collagen. Acts by inhibiting fibrinogen interaction with platelet receptors GPIIb/GPIIIa (ITGA2B/ITGB3). The chain is Zinc metalloproteinase/disintegrin from Craspedocephalus gramineus (Bamboo pit viper).